The primary structure comprises 38 residues: MKIYSSIKKRCEHCRIVKRKGKRYVICKVNPSHKQRQG.

This sequence belongs to the bacterial ribosomal protein bL36 family.

This Pelodictyon phaeoclathratiforme (strain DSM 5477 / BU-1) protein is Large ribosomal subunit protein bL36.